Reading from the N-terminus, the 305-residue chain is Methionyl-tRNA formyltransferase (305 aa).

111 to 114 provides a ligand contact to (6S)-5,6,7,8-tetrahydrofolate; that stretch reads SLLP.

Belongs to the Fmt family.

It catalyses the reaction L-methionyl-tRNA(fMet) + (6R)-10-formyltetrahydrofolate = N-formyl-L-methionyl-tRNA(fMet) + (6S)-5,6,7,8-tetrahydrofolate + H(+). Attaches a formyl group to the free amino group of methionyl-tRNA(fMet). The formyl group appears to play a dual role in the initiator identity of N-formylmethionyl-tRNA by promoting its recognition by IF2 and preventing the misappropriation of this tRNA by the elongation apparatus. This Helicobacter pylori (strain HPAG1) protein is Methionyl-tRNA formyltransferase.